We begin with the raw amino-acid sequence, 412 residues long: Stachydrine N-demethylase (412 aa).

Positions 45–150 (LYAVPVCQLA…LRNLDGLIYI (106 aa)) constitute a Rieske domain. [2Fe-2S] cluster contacts are provided by Cys-86, His-88, Cys-106, and His-109. 3 residues coordinate Fe cation: His-204, His-209, and Asp-360.

This sequence belongs to the bacterial ring-hydroxylating dioxygenase alpha subunit family. In terms of assembly, homotrimer. The system is probably composed of an oxygenase subunit (Stc2) and two reductase subunits (Stc3 and Stc4). Requires [2Fe-2S] cluster as cofactor. The cofactor is Fe cation.

The catalysed reaction is L-proline betaine + NADH + O2 + H(+) = N-methyl-L-proline + formaldehyde + NAD(+) + H2O. It carries out the reaction L-proline betaine + NADPH + O2 + H(+) = N-methyl-L-proline + formaldehyde + NADP(+) + H2O. In terms of biological role, monooxygenase involved in the catabolism of stachydrine (L-proline betaine), a source of carbon and nitrogen. Part of a Rieske-type oxygenase system that catalyzes the demethylation of stachydrine to produce N-methyl-L-proline (monomethylproline). Stc2 is the catalytic subunit. The sequence is that of Stachydrine N-demethylase from Rhizobium meliloti (strain 1021) (Ensifer meliloti).